A 365-amino-acid chain; its full sequence is Succinyl-diaminopimelate desuccinylase (365 aa).

Zn(2+) is bound at residue His-64. Asp-66 is a catalytic residue. A Zn(2+)-binding site is contributed by Asp-95. The active-site Proton acceptor is Glu-125. Residues Glu-126, Glu-154, and His-339 each coordinate Zn(2+).

This sequence belongs to the peptidase M20A family. DapE subfamily. Homodimer. Zn(2+) serves as cofactor. Requires Co(2+) as cofactor.

It catalyses the reaction N-succinyl-(2S,6S)-2,6-diaminopimelate + H2O = (2S,6S)-2,6-diaminopimelate + succinate. Its pathway is amino-acid biosynthesis; L-lysine biosynthesis via DAP pathway; LL-2,6-diaminopimelate from (S)-tetrahydrodipicolinate (succinylase route): step 3/3. Its function is as follows. Catalyzes the hydrolysis of N-succinyl-L,L-diaminopimelic acid (SDAP), forming succinate and LL-2,6-diaminopimelate (DAP), an intermediate involved in the bacterial biosynthesis of lysine and meso-diaminopimelic acid, an essential component of bacterial cell walls. This chain is Succinyl-diaminopimelate desuccinylase, found in Campylobacter curvus (strain 525.92).